The chain runs to 116 residues: Putative pterin-4-alpha-carbinolamine dehydratase 1 (116 aa).

Belongs to the pterin-4-alpha-carbinolamine dehydratase family.

The enzyme catalyses (4aS,6R)-4a-hydroxy-L-erythro-5,6,7,8-tetrahydrobiopterin = (6R)-L-erythro-6,7-dihydrobiopterin + H2O. This chain is Putative pterin-4-alpha-carbinolamine dehydratase 1, found in Gloeobacter violaceus (strain ATCC 29082 / PCC 7421).